Consider the following 277-residue polypeptide: Putative acetylornithine deacetylase (277 aa).

It catalyses the reaction N(2)-acetyl-L-ornithine + H2O = L-ornithine + acetate. It participates in amino-acid biosynthesis; L-arginine biosynthesis; L-ornithine from N(2)-acetyl-L-ornithine (linear): step 1/1. The polypeptide is Putative acetylornithine deacetylase (argE) (Leptospira biflexa).